The chain runs to 128 residues: UPF0102 protein Acry_2261 (128 aa).

This sequence belongs to the UPF0102 family.

This chain is UPF0102 protein Acry_2261, found in Acidiphilium cryptum (strain JF-5).